Consider the following 526-residue polypeptide: Histone-lysine N-methyltransferase SET5 (526 aa).

The region spanning 112 to 403 (AKVEVKFIDD…KGEQIRITYV (292 aa)) is the SET domain. The segment at 450–492 (NLGVEKIDSNDNSEDGSKKSTGNRKSSMREAQPDLKEILKNGK) is disordered. Basic and acidic residues predominate over residues 476–492 (SMREAQPDLKEILKNGK). S517 carries the post-translational modification Phosphoserine.

Belongs to the class V-like SAM-binding methyltransferase superfamily. Histone-lysine methyltransferase family. SET5 subfamily.

The protein localises to the nucleus. It localises to the chromosome. Its subcellular location is the cytoplasm. The enzyme catalyses L-lysyl-[histone] + S-adenosyl-L-methionine = N(6)-methyl-L-lysyl-[histone] + S-adenosyl-L-homocysteine + H(+). Histone methyltransferase that monomethylates 'Lys-5', 'Lys-8' and 'Lys-12' of histone H4 (H4K5me1, H4K8me1 and H4K12me1, respectively), thereby controlling gene expression and remodeling chromatin structures. In Saccharomyces cerevisiae (strain YJM789) (Baker's yeast), this protein is Histone-lysine N-methyltransferase SET5 (SET5).